A 699-amino-acid chain; its full sequence is Elongation factor G (699 aa).

The 281-residue stretch at 8–288 (EDYRNFGIMA…AVVDYLPSPL (281 aa)) folds into the tr-type G domain. Residues 17 to 24 (AHIDAGKT), 86 to 90 (DTPGH), and 140 to 143 (NKMD) each bind GTP.

This sequence belongs to the TRAFAC class translation factor GTPase superfamily. Classic translation factor GTPase family. EF-G/EF-2 subfamily.

It localises to the cytoplasm. Functionally, catalyzes the GTP-dependent ribosomal translocation step during translation elongation. During this step, the ribosome changes from the pre-translocational (PRE) to the post-translocational (POST) state as the newly formed A-site-bound peptidyl-tRNA and P-site-bound deacylated tRNA move to the P and E sites, respectively. Catalyzes the coordinated movement of the two tRNA molecules, the mRNA and conformational changes in the ribosome. The chain is Elongation factor G from Agrobacterium fabrum (strain C58 / ATCC 33970) (Agrobacterium tumefaciens (strain C58)).